The primary structure comprises 261 residues: Short-chain dehydrogenase/reductase ARMGADRAFT_1018421 (261 aa).

Residues Ile21, Asp68, Asn95, Lys128, Tyr161, Lys165, Val194, and Thr196 each contribute to the NADP(+) site. Residue Tyr161 is the Proton acceptor of the active site. Catalysis depends on Lys165, which acts as the Lowers pKa of active site Tyr.

The protein belongs to the short-chain dehydrogenases/reductases (SDR) family.

The protein operates within secondary metabolite biosynthesis. Its function is as follows. Short-chain dehydrogenase/reductase, part of the gene cluster that mediates the biosynthesis of melleolides, a range of antifungal and phytotoxic polyketide derivatives composed of an orsellinic acid (OA) moiety esterified to various sesquiterpene alcohols. The first step in melleolides biosynthesis is performed by the delta(6)-protoilludene synthase PRO1 which catalyzes the cyclization of farnesyl diphosphate to protoilludene. The orsellinic acid synthase armB produces OA by condensing acetyl-CoA with 3 malonyl-CoA units in a three-round chain elongation reaction folowed by a C2-C7 ring closure. ArmB further catalyzes the trans-esterification of OA to the various sesquiterpene alcohols resulting from the hydroxylation of protoilludene. The melleolides cluster also includes 5 cytochrome P450 monooxygenases, 4 NAD(+)-dependent oxidoreductases, one flavin-dependent oxidoreductase, and one O-methyltransferase. The cytochrome P450 monooxygenases may be involved in protoilludene hydroxylation to elaborate melleolides with multiple alcohol groups, such as melleolide D, which carries alcohol functionalities at C-4, C-5, C-10, and C-13. The role of the NAD(+)-dependent enzymes remains unknown. Numerous melleolides, including arnamial, show 5'-O-methylation of the aromatic moiety which may be catalyzed by the methyltransferase encoded in the cluster. The flavin-dependent oxidoreductase might represent the dehydrogenase yielding the aldehyde in position 1 of arnamial and other melleolides. Finally, several halogenase localized outside of the cluster, are able to catalyze the transfer of a single chlorine atom to the melleolide backbone, resulting in a 6'-chloromelleolide product. The polypeptide is Short-chain dehydrogenase/reductase ARMGADRAFT_1018421 (Armillaria gallica (Bulbous honey fungus)).